The chain runs to 161 residues: MSVPTTDLCDDFADELRVMNPMFRDFGGRVRFHGPVTTVKLFEDNSAVREALSEPGEGRVLVVDGGGSMRCALLGDNLAALGQKNGWAGVVVYGCVRDSAELATIDLGVKALNVHPLKSVKKGIGERDVTVTFAGITIQAGDWLYADEDGIVVARNSLVQA.

Substrate-binding positions include 75-78 (GDNL) and R97. An a divalent metal cation-binding site is contributed by D98.

This sequence belongs to the class II aldolase/RraA-like family. As to quaternary structure, homotrimer. It depends on a divalent metal cation as a cofactor.

The enzyme catalyses 4-hydroxy-4-methyl-2-oxoglutarate = 2 pyruvate. It carries out the reaction oxaloacetate + H(+) = pyruvate + CO2. In terms of biological role, catalyzes the aldol cleavage of 4-hydroxy-4-methyl-2-oxoglutarate (HMG) into 2 molecules of pyruvate. Also contains a secondary oxaloacetate (OAA) decarboxylase activity due to the common pyruvate enolate transition state formed following C-C bond cleavage in the retro-aldol and decarboxylation reactions. This chain is Putative 4-hydroxy-4-methyl-2-oxoglutarate aldolase, found in Alkalilimnicola ehrlichii (strain ATCC BAA-1101 / DSM 17681 / MLHE-1).